The following is a 130-amino-acid chain: Small ribosomal subunit protein uS8 (130 aa).

It belongs to the universal ribosomal protein uS8 family. Part of the 30S ribosomal subunit. Contacts proteins S5 and S12.

Its function is as follows. One of the primary rRNA binding proteins, it binds directly to 16S rRNA central domain where it helps coordinate assembly of the platform of the 30S subunit. The chain is Small ribosomal subunit protein uS8 from Shewanella frigidimarina (strain NCIMB 400).